The primary structure comprises 693 residues: MALTRQELELIRRGLGREPTAAELAFFTSHWSEHCSYKSTRRWLRELPGSAPWVVRGRGTDAPLVEVAPGLYVSFKIESHNHPSAVDPYNGAATGVGGIIRDILTVGATPVALLVNLHFGPPEDPHARWIFSNVVKGISDYGNRVGVPVVGGETWFDEDFTYTPIVLATCVGVVEAEAVPRGGVAPGDYLVVAGLGADRSGLGGSAFASKTLEGGEDLGAVQVADPLMGKKLIDVVREAGRCVKFIKDLGGGGLATALAELSSWFSLGIEFHLDKLHVRDRAAAPEELLISETQERLIFVVSPQDLPCLEAALRRYEVPYSIPGRFVEGGRVWVMWRGERVVDIPISLADGAPEVLWPQEPYQPPELPQLPEPPLEKALDLVLSSPNVAKKESIYMRFDFDVGVKTAVKPGEGDAAVLKLYQRGQLGLVVKGDANPRYTFLDPRLGAANAFVKAYRNVAVVGGVPLAAVDSINVGSPERPRVYWQFVQAVQGLREAAAELEVPIVGGKVSLYNEYMGRPVKPTVAVVVLGRIDDVSKANRAMWREGDRIFVWGVTRGEVGGSEYLKRVHGVVAGRPPAVDYGAERKIVDVVQSWLGRLTGATDVGVGGLAAALAKMAVNSGVGATVDVCRAPSDVGRLDFLLFSESNGRFVAAGEEGPGVAVGEAHGDVFEVRCGGTLLYKRRVEELRRLMLL.

H34 is an active-site residue. Positions 37 and 76 each coordinate ATP. E78 is a binding site for Mg(2+). Substrate contacts are provided by residues 79 to 82 (SHNH) and R101. The active-site Proton acceptor is the H80. D102 serves as a coordination point for Mg(2+). Q222 serves as a coordination point for substrate. Position 248 (D248) interacts with Mg(2+). Position 292–294 (292–294 (ETQ)) interacts with substrate. Residues D470 and G507 each contribute to the ATP site. S510 provides a ligand contact to substrate.

This sequence belongs to the FGAMS family. As to quaternary structure, monomer. Part of the FGAM synthase complex composed of 1 PurL, 1 PurQ and 2 PurS subunits.

The protein resides in the cytoplasm. The enzyme catalyses N(2)-formyl-N(1)-(5-phospho-beta-D-ribosyl)glycinamide + L-glutamine + ATP + H2O = 2-formamido-N(1)-(5-O-phospho-beta-D-ribosyl)acetamidine + L-glutamate + ADP + phosphate + H(+). Its pathway is purine metabolism; IMP biosynthesis via de novo pathway; 5-amino-1-(5-phospho-D-ribosyl)imidazole from N(2)-formyl-N(1)-(5-phospho-D-ribosyl)glycinamide: step 1/2. In terms of biological role, part of the phosphoribosylformylglycinamidine synthase complex involved in the purines biosynthetic pathway. Catalyzes the ATP-dependent conversion of formylglycinamide ribonucleotide (FGAR) and glutamine to yield formylglycinamidine ribonucleotide (FGAM) and glutamate. The FGAM synthase complex is composed of three subunits. PurQ produces an ammonia molecule by converting glutamine to glutamate. PurL transfers the ammonia molecule to FGAR to form FGAM in an ATP-dependent manner. PurS interacts with PurQ and PurL and is thought to assist in the transfer of the ammonia molecule from PurQ to PurL. The protein is Phosphoribosylformylglycinamidine synthase subunit PurL of Pyrobaculum neutrophilum (strain DSM 2338 / JCM 9278 / NBRC 100436 / V24Sta) (Thermoproteus neutrophilus).